Consider the following 525-residue polypeptide: Tigger transposable element-derived protein 2 (525 aa).

The HTH psq-type domain occupies 1–52 (MLGKRKRVVLTIKDKLDIIKKLEEGNSFKKLSVLYGIGESTVRDIKKNKERI). DNA-binding regions (H-T-H motif) lie at residues 28-48 (FKKL…IKKN) and 100-132 (TICA…FKQR). The HTH CENPB-type domain occupies 67–139 (KRKSMKSSTY…KQRHGIPKAA (73 aa)). One can recognise a DDE-1 domain in the interval 168 to 385 (LLPEQIYGAD…IRSNTITRAW (218 aa)).

Belongs to the tigger transposable element derived protein family.

It localises to the nucleus. In Mus musculus (Mouse), this protein is Tigger transposable element-derived protein 2 (Tigd2).